Reading from the N-terminus, the 104-residue chain is Nucleoid-associated protein DICTH_1981 (104 aa).

The interval 85 to 104 is disordered; the sequence is KSAEKMGSLADGLPLPPGLF.

Belongs to the YbaB/EbfC family. Homodimer.

The protein resides in the cytoplasm. Its subcellular location is the nucleoid. Its function is as follows. Binds to DNA and alters its conformation. May be involved in regulation of gene expression, nucleoid organization and DNA protection. This chain is Nucleoid-associated protein DICTH_1981, found in Dictyoglomus thermophilum (strain ATCC 35947 / DSM 3960 / H-6-12).